We begin with the raw amino-acid sequence, 90 residues long: UPF0367 protein Ava_2513 (90 aa).

The protein belongs to the UPF0367 family.

The chain is UPF0367 protein Ava_2513 from Trichormus variabilis (strain ATCC 29413 / PCC 7937) (Anabaena variabilis).